Here is a 562-residue protein sequence, read N- to C-terminus: mRNA cleavage and polyadenylation factor CLP1 (562 aa).

The interval 1-27 (MSLPGLELSQQPIEARRAPPQPTQISL) is disordered. ATP contacts are provided by residues E32, K71, and 154-159 (DAGKTS). The tract at residues 415-483 (EDEYDPSKFD…STTPFTNLPS (69 aa)) is disordered. The span at 445-479 (SLQPPSGLLPGLRSELPSATTGFPSASTSSTTPFT) shows a compositional bias: low complexity.

The protein belongs to the Clp1 family. Clp1 subfamily. As to quaternary structure, component of a pre-mRNA cleavage factor complex. Interacts directly with PCF11.

It is found in the nucleus. Its function is as follows. Required for endonucleolytic cleavage during polyadenylation-dependent pre-mRNA 3'-end formation. In Coccidioides immitis (strain RS) (Valley fever fungus), this protein is mRNA cleavage and polyadenylation factor CLP1.